Here is a 161-residue protein sequence, read N- to C-terminus: Regulator of ribonuclease activity A (161 aa).

The protein belongs to the RraA family. In terms of assembly, homotrimer. Binds to both RNA-binding sites in the C-terminal region of Rne and to RhlB.

It localises to the cytoplasm. Functionally, globally modulates RNA abundance by binding to RNase E (Rne) and regulating its endonucleolytic activity. Can modulate Rne action in a substrate-dependent manner by altering the composition of the degradosome. Modulates RNA-binding and helicase activities of the degradosome. In Salmonella agona (strain SL483), this protein is Regulator of ribonuclease activity A.